Consider the following 456-residue polypeptide: Kynurenine 3-monooxygenase (456 aa).

It belongs to the aromatic-ring hydroxylase family. KMO subfamily. The cofactor is FAD.

It is found in the mitochondrion outer membrane. The catalysed reaction is L-kynurenine + NADPH + O2 + H(+) = 3-hydroxy-L-kynurenine + NADP(+) + H2O. The protein operates within cofactor biosynthesis; NAD(+) biosynthesis; quinolinate from L-kynurenine: step 1/3. In terms of biological role, catalyzes the hydroxylation of L-kynurenine (L-Kyn) to form 3-hydroxy-L-kynurenine (L-3OHKyn). Required for synthesis of quinolinic acid. In Candida albicans (strain SC5314 / ATCC MYA-2876) (Yeast), this protein is Kynurenine 3-monooxygenase.